The chain runs to 319 residues: Acetyl-coenzyme A carboxylase carboxyl transferase subunit alpha (319 aa).

In terms of domain architecture, CoA carboxyltransferase C-terminal spans leucine 43 to glutamate 296.

It belongs to the AccA family. Acetyl-CoA carboxylase is a heterohexamer composed of biotin carboxyl carrier protein (AccB), biotin carboxylase (AccC) and two subunits each of ACCase subunit alpha (AccA) and ACCase subunit beta (AccD).

Its subcellular location is the cytoplasm. It carries out the reaction N(6)-carboxybiotinyl-L-lysyl-[protein] + acetyl-CoA = N(6)-biotinyl-L-lysyl-[protein] + malonyl-CoA. The protein operates within lipid metabolism; malonyl-CoA biosynthesis; malonyl-CoA from acetyl-CoA: step 1/1. Functionally, component of the acetyl coenzyme A carboxylase (ACC) complex. First, biotin carboxylase catalyzes the carboxylation of biotin on its carrier protein (BCCP) and then the CO(2) group is transferred by the carboxyltransferase to acetyl-CoA to form malonyl-CoA. The chain is Acetyl-coenzyme A carboxylase carboxyl transferase subunit alpha from Baumannia cicadellinicola subsp. Homalodisca coagulata.